We begin with the raw amino-acid sequence, 331 residues long: Biotin synthase (331 aa).

A Radical SAM core domain is found at 52-277 (PEVEVEGIVS…RTILRYAGGR (226 aa)). Cysteine 67, cysteine 71, and cysteine 74 together coordinate [4Fe-4S] cluster. Cysteine 110, cysteine 202, and arginine 272 together coordinate [2Fe-2S] cluster.

It belongs to the radical SAM superfamily. Biotin synthase family. As to quaternary structure, homodimer. [4Fe-4S] cluster serves as cofactor. [2Fe-2S] cluster is required as a cofactor.

The catalysed reaction is (4R,5S)-dethiobiotin + (sulfur carrier)-SH + 2 reduced [2Fe-2S]-[ferredoxin] + 2 S-adenosyl-L-methionine = (sulfur carrier)-H + biotin + 2 5'-deoxyadenosine + 2 L-methionine + 2 oxidized [2Fe-2S]-[ferredoxin]. It functions in the pathway cofactor biosynthesis; biotin biosynthesis; biotin from 7,8-diaminononanoate: step 2/2. Catalyzes the conversion of dethiobiotin (DTB) to biotin by the insertion of a sulfur atom into dethiobiotin via a radical-based mechanism. The sequence is that of Biotin synthase from Salinispora tropica (strain ATCC BAA-916 / DSM 44818 / JCM 13857 / NBRC 105044 / CNB-440).